The primary structure comprises 126 residues: Fatty acid-binding protein, liver (126 aa).

Ala2 carries the N-acetylalanine modification.

The protein belongs to the calycin superfamily. Fatty-acid binding protein (FABP) family. In terms of tissue distribution, liver.

The protein resides in the cytoplasm. Binds free fatty acids and their coenzyme A derivatives, bilirubin, and some other small molecules in the cytoplasm. May be involved in intracellular lipid transport this L-FABP binds only one fatty acid/molecule. Has more affinity for trans-parinaric acid than for cis-parinaric acid. This Rhamdia sapo (South American catfish) protein is Fatty acid-binding protein, liver (fabp1).